The primary structure comprises 209 residues: Ribosomal RNA small subunit methyltransferase G (209 aa).

Gly-74, Phe-79, and Arg-139 together coordinate S-adenosyl-L-methionine.

This sequence belongs to the methyltransferase superfamily. RNA methyltransferase RsmG family.

The protein resides in the cytoplasm. It catalyses the reaction guanosine(527) in 16S rRNA + S-adenosyl-L-methionine = N(7)-methylguanosine(527) in 16S rRNA + S-adenosyl-L-homocysteine. In terms of biological role, specifically methylates the N7 position of guanine in position 527 of 16S rRNA. The chain is Ribosomal RNA small subunit methyltransferase G from Halorhodospira halophila (strain DSM 244 / SL1) (Ectothiorhodospira halophila (strain DSM 244 / SL1)).